The primary structure comprises 491 residues: UDP-N-acetylmuramate--L-alanine ligase (491 aa).

126 to 132 contributes to the ATP binding site; it reads GTHGKTT.

Belongs to the MurCDEF family.

Its subcellular location is the cytoplasm. The catalysed reaction is UDP-N-acetyl-alpha-D-muramate + L-alanine + ATP = UDP-N-acetyl-alpha-D-muramoyl-L-alanine + ADP + phosphate + H(+). Its pathway is cell wall biogenesis; peptidoglycan biosynthesis. Cell wall formation. The polypeptide is UDP-N-acetylmuramate--L-alanine ligase (Shigella dysenteriae serotype 1 (strain Sd197)).